Here is a 382-residue protein sequence, read N- to C-terminus: MTTLASSISERYIGLMSGTSLDGVDGVLVDFSGPRPMLLTDAYVPFPPALRQAFFDLQSAGHNEIHREALAANALADLYAECVAQLLHESGCDPREVRAIGAHGQTIRHQPGEHDGIGYTRQTQHAAVLAERTGIDVIADFRSRDIAAGGQGAPLVPAVHRALFALPDAWRVVCNIGGIANLTVLPPQQSDARDRVLGFDCGPGNALLDYWVHAHRGEAYDRNGEWARSGWIDAALLETLRSEPFFARMPPKSTGRDLFNPTWLQQQAGDTLERIRPEDVQATLLALTADTIADAVRTHAPRTASLVVCGGGARNGALMQRLAAQLPGTLVAASDDFGVPAHQVEALAFAWLARQCVRREPGNVYHATGAAGPRVLGTIYPA.

18–25 (GTSLDGVD) contacts ATP.

Belongs to the anhydro-N-acetylmuramic acid kinase family.

It catalyses the reaction 1,6-anhydro-N-acetyl-beta-muramate + ATP + H2O = N-acetyl-D-muramate 6-phosphate + ADP + H(+). The protein operates within amino-sugar metabolism; 1,6-anhydro-N-acetylmuramate degradation. It functions in the pathway cell wall biogenesis; peptidoglycan recycling. Functionally, catalyzes the specific phosphorylation of 1,6-anhydro-N-acetylmuramic acid (anhMurNAc) with the simultaneous cleavage of the 1,6-anhydro ring, generating MurNAc-6-P. Is required for the utilization of anhMurNAc either imported from the medium or derived from its own cell wall murein, and thus plays a role in cell wall recycling. The chain is Anhydro-N-acetylmuramic acid kinase from Ralstonia nicotianae (strain ATCC BAA-1114 / GMI1000) (Ralstonia solanacearum).